Consider the following 157-residue polypeptide: MRIGHGFDVHKFGGEGPVIIGGVAIPYEQGLIAHSDGDVALHAVCDALLGAIGAGDIGRHFPDTDAEWKGADSRFLLRDVYSKVKDKGYRLGNLDVTIIAQAPKMAPYIDAMCQAIAEDLETDIGNVNVKATTSERLGFTGRKEGIACEAVVLINAQ.

A divalent metal cation is bound by residues aspartate 8 and histidine 10. Residues 8–10 and 34–35 contribute to the 4-CDP-2-C-methyl-D-erythritol 2-phosphate site; these read DVH and HS. Histidine 42 is an a divalent metal cation binding site. 4-CDP-2-C-methyl-D-erythritol 2-phosphate-binding positions include 56 to 58, 61 to 65, 100 to 106, 132 to 135, phenylalanine 139, and arginine 142; these read DIG, FPDTD, AQAPKMA, and TTSE.

This sequence belongs to the IspF family. Homotrimer. A divalent metal cation is required as a cofactor.

The enzyme catalyses 4-CDP-2-C-methyl-D-erythritol 2-phosphate = 2-C-methyl-D-erythritol 2,4-cyclic diphosphate + CMP. It functions in the pathway isoprenoid biosynthesis; isopentenyl diphosphate biosynthesis via DXP pathway; isopentenyl diphosphate from 1-deoxy-D-xylulose 5-phosphate: step 4/6. Its function is as follows. Involved in the biosynthesis of isopentenyl diphosphate (IPP) and dimethylallyl diphosphate (DMAPP), two major building blocks of isoprenoid compounds. Catalyzes the conversion of 4-diphosphocytidyl-2-C-methyl-D-erythritol 2-phosphate (CDP-ME2P) to 2-C-methyl-D-erythritol 2,4-cyclodiphosphate (ME-CPP) with a corresponding release of cytidine 5-monophosphate (CMP). In Photobacterium profundum (strain SS9), this protein is 2-C-methyl-D-erythritol 2,4-cyclodiphosphate synthase.